The sequence spans 177 residues: Large ribosomal subunit protein uL6 (177 aa).

This sequence belongs to the universal ribosomal protein uL6 family. Part of the 50S ribosomal subunit.

This protein binds to the 23S rRNA, and is important in its secondary structure. It is located near the subunit interface in the base of the L7/L12 stalk, and near the tRNA binding site of the peptidyltransferase center. In Methylobacterium sp. (strain 4-46), this protein is Large ribosomal subunit protein uL6.